The chain runs to 372 residues: NAD(P)H-quinone oxidoreductase subunit 1 (372 aa).

8 helical membrane-spanning segments follow: residues 27-47 (MLWL…GVLV), 97-117 (ILFT…WLIV), 128-148 (VGVG…GLLM), 166-186 (AAQS…VVMM), 204-224 (VLSW…ICAL), 266-286 (VLSA…PIPV), 308-328 (TVGI…AILL), and 347-367 (FLLP…LAFP).

The protein belongs to the complex I subunit 1 family. NDH-1 is composed of at least 11 different subunits.

It localises to the cellular thylakoid membrane. It carries out the reaction a plastoquinone + NADH + (n+1) H(+)(in) = a plastoquinol + NAD(+) + n H(+)(out). It catalyses the reaction a plastoquinone + NADPH + (n+1) H(+)(in) = a plastoquinol + NADP(+) + n H(+)(out). Its function is as follows. NDH-1 shuttles electrons from an unknown electron donor, via FMN and iron-sulfur (Fe-S) centers, to quinones in the respiratory and/or the photosynthetic chain. The immediate electron acceptor for the enzyme in this species is believed to be plastoquinone. Couples the redox reaction to proton translocation, and thus conserves the redox energy in a proton gradient. This chain is NAD(P)H-quinone oxidoreductase subunit 1, found in Synechococcus sp. (strain CC9311).